A 318-amino-acid chain; its full sequence is tRNA pseudouridine synthase B (318 aa).

Aspartate 47 functions as the Nucleophile in the catalytic mechanism.

Belongs to the pseudouridine synthase TruB family. Type 1 subfamily.

The catalysed reaction is uridine(55) in tRNA = pseudouridine(55) in tRNA. Its function is as follows. Responsible for synthesis of pseudouridine from uracil-55 in the psi GC loop of transfer RNAs. The polypeptide is tRNA pseudouridine synthase B (Colwellia psychrerythraea (strain 34H / ATCC BAA-681) (Vibrio psychroerythus)).